Consider the following 218-residue polypeptide: External core antigen (218 aa).

A signal peptide spans 1–19 (MYLFHLCLVFACVPCPTFQ). Residues 26–28 (GWL) form an HBEAG region. Basic residues predominate over residues 180 to 211 (RRRGGARASRSPRRRTPSPRRRRSQSPRRRRS). The disordered stretch occupies residues 180-218 (RRRGGARASRSPRRRTPSPRRRRSQSPRRRRSQSPSANC). The 1; half-length repeat unit spans residues 190–196 (SPRRRTP). The tract at residues 190 to 212 (SPRRRTPSPRRRRSQSPRRRRSQ) is 3 X 8 AA repeats of S-P-R-R-R-R-S-Q. Positions 190-218 (SPRRRTPSPRRRRSQSPRRRRSQSPSANC) are excised as a propeptide. 2 consecutive repeat copies span residues 197–204 (SPRRRRSQ) and 205–212 (SPRRRRSQ).

This sequence belongs to the orthohepadnavirus precore antigen family. Homodimerizes. Post-translationally, phosphorylated. Cleaved by host furin.

The protein resides in the secreted. Its subcellular location is the host nucleus. May regulate immune response to the intracellular capsid in acting as a T-cell tolerogen, by having an immunoregulatory effect which prevents destruction of infected cells by cytotoxic T-cells. This immune regulation may predispose to chronicity during perinatal infections and prevent severe liver injury during adult infections. This Marmota monax (Woodchuck) protein is External core antigen.